Consider the following 429-residue polypeptide: Adenosylhomocysteinase (429 aa).

Residues Thr64, Asp136, and Glu161 each coordinate substrate. Residue 162–164 (TTT) participates in NAD(+) binding. 2 residues coordinate substrate: Lys191 and Asp195. NAD(+) contacts are provided by residues Asn196, 225-230 (GYGWCG), Glu248, Asn283, 304-306 (SGH), and Asn351.

It belongs to the adenosylhomocysteinase family. The cofactor is NAD(+).

It localises to the cytoplasm. The catalysed reaction is S-adenosyl-L-homocysteine + H2O = L-homocysteine + adenosine. It participates in amino-acid biosynthesis; L-homocysteine biosynthesis; L-homocysteine from S-adenosyl-L-homocysteine: step 1/1. In terms of biological role, may play a key role in the regulation of the intracellular concentration of adenosylhomocysteine. The chain is Adenosylhomocysteinase from Thermosynechococcus vestitus (strain NIES-2133 / IAM M-273 / BP-1).